A 92-amino-acid chain; its full sequence is Small ribosomal subunit protein uS19 (92 aa).

The protein belongs to the universal ribosomal protein uS19 family.

Its function is as follows. Protein S19 forms a complex with S13 that binds strongly to the 16S ribosomal RNA. The chain is Small ribosomal subunit protein uS19 from Aliivibrio fischeri (strain ATCC 700601 / ES114) (Vibrio fischeri).